Reading from the N-terminus, the 397-residue chain is LIM/homeobox protein Lhx3 (397 aa).

LIM zinc-binding domains follow at residues 31-81 (CAGC…CKDD) and 90-144 (CAAC…CKAD). Position 63 is a phosphothreonine (Thr-63). Ser-71 carries the phosphoserine modification. A DNA-binding region (homeobox) is located at residues 157 to 216 (AKRPRTTITAKQLETLKSAYNTSPKPARHVREQLSSETGLDMRVVQVWFQNRRAKEKRLK). A disordered region spans residues 212 to 397 (EKRLKKDAGR…WLDEVDHAQF (186 aa)). Tyr-227 bears the Phosphotyrosine mark. A phosphoserine mark is found at Ser-234 and Ser-238. Positions 316–331 (GVPPSPAAPQSLPGPQ) are enriched in pro residues.

Interacts with POU1F1. At neuronal promoters, interacts with LDB1, in motor neurons LDB1 is displaced by ISL1 and a ternary complex is formed in which ISL1 contacts both LHX3 and LDB1; allosteric structural changes in the DNA binding domain of LHX3, induced by the ISL1-LHX3 interaction, may explain differences in sequence specificity of the different complexes. Interacts with LDB2. May interact with CITED2/MRG1.

It localises to the nucleus. Its function is as follows. Transcription factor. Recognizes and binds to the consensus sequence motif 5'-AATTAATTA-3' in the regulatory elements of target genes, such as glycoprotein hormones alpha chain CGA and visual system homeobox CHX10, positively modulating transcription; transcription can be co-activated by LDB2. Synergistically enhances transcription from the prolactin promoter in cooperation with POU1F1/Pit-1. Required for the establishment of the specialized cells of the pituitary gland and the nervous system. Involved in the development of interneurons and motor neurons in cooperation with LDB1 and ISL1. This chain is LIM/homeobox protein Lhx3 (LHX3), found in Homo sapiens (Human).